Reading from the N-terminus, the 640-residue chain is Threonine--tRNA ligase (640 aa).

A TGS domain is found at 1–60 (MKITFPDGAVKEFEPGVSTADIAASISPGLKKKALAGKLNGELLDLVTPIHEDGAIEIVT). The catalytic stretch occupies residues 241–538 (DHRKLGKELD…LIEEYKGAFP (298 aa)). Zn(2+) is bound by residues Cys334, His385, and His515.

Belongs to the class-II aminoacyl-tRNA synthetase family. As to quaternary structure, homodimer. Zn(2+) is required as a cofactor.

Its subcellular location is the cytoplasm. The enzyme catalyses tRNA(Thr) + L-threonine + ATP = L-threonyl-tRNA(Thr) + AMP + diphosphate + H(+). Its function is as follows. Catalyzes the attachment of threonine to tRNA(Thr) in a two-step reaction: L-threonine is first activated by ATP to form Thr-AMP and then transferred to the acceptor end of tRNA(Thr). Also edits incorrectly charged L-seryl-tRNA(Thr). This is Threonine--tRNA ligase from Listeria monocytogenes serotype 4b (strain CLIP80459).